The primary structure comprises 176 residues: Large ribosomal subunit protein uL22z (176 aa).

The span at 154–163 shows a compositional bias: basic and acidic residues; that stretch reads KEEPVKKEPE. Positions 154–176 are disordered; it reads KEEPVKKEPETQLAAKSKKGASS.

It belongs to the universal ribosomal protein uL22 family.

The protein is Large ribosomal subunit protein uL22z (RPL17A) of Arabidopsis thaliana (Mouse-ear cress).